The following is a 341-amino-acid chain: DNA-directed RNA polymerase subunit alpha (341 aa).

The tract at residues Met-1 to Glu-233 is alpha N-terminal domain (alpha-NTD). The segment at Asp-262–Asp-341 is alpha C-terminal domain (alpha-CTD).

Belongs to the RNA polymerase alpha chain family. As to quaternary structure, in plastids the minimal PEP RNA polymerase catalytic core is composed of four subunits: alpha, beta, beta', and beta''. When a (nuclear-encoded) sigma factor is associated with the core the holoenzyme is formed, which can initiate transcription.

It localises to the plastid. It is found in the chloroplast. The catalysed reaction is RNA(n) + a ribonucleoside 5'-triphosphate = RNA(n+1) + diphosphate. Functionally, DNA-dependent RNA polymerase catalyzes the transcription of DNA into RNA using the four ribonucleoside triphosphates as substrates. The polypeptide is DNA-directed RNA polymerase subunit alpha (Angiopteris evecta (Mule's foot fern)).